The sequence spans 594 residues: UvrABC system protein C (594 aa).

The region spanning 13 to 99 is the GIY-YIG domain; the sequence is NSSGVYQYFD…IKQLKPKYNI (87 aa). Positions 205–240 constitute a UVR domain; the sequence is DRLIKELELKMERLSNNLRFEEALIYRDRIAKIQKI.

Belongs to the UvrC family. In terms of assembly, interacts with UvrB in an incision complex.

The protein localises to the cytoplasm. Its function is as follows. The UvrABC repair system catalyzes the recognition and processing of DNA lesions. UvrC both incises the 5' and 3' sides of the lesion. The N-terminal half is responsible for the 3' incision and the C-terminal half is responsible for the 5' incision. This is UvrABC system protein C from Helicobacter pylori (strain ATCC 700392 / 26695) (Campylobacter pylori).